The sequence spans 166 residues: Ureidoglycolate lyase (166 aa).

The protein belongs to the ureidoglycolate lyase family. Homodimer. The cofactor is Ni(2+).

The catalysed reaction is (S)-ureidoglycolate = urea + glyoxylate. It participates in nitrogen metabolism; (S)-allantoin degradation. Its function is as follows. Catalyzes the catabolism of the allantoin degradation intermediate (S)-ureidoglycolate, generating urea and glyoxylate. Involved in the utilization of allantoin as nitrogen source. The sequence is that of Ureidoglycolate lyase from Agrobacterium fabrum (strain C58 / ATCC 33970) (Agrobacterium tumefaciens (strain C58)).